The primary structure comprises 372 residues: MNSGLDLEYSFNEILKGFGLSSELAHIIWLPLPMLLVLVSAVVGVLVTVWLERKISAAAQQRIGPEYAGALGVLQPIADGLKLLVKEDIIPAKADSILFTAGPILVLVPVILSWLIVPFGQNLLISNVGIGIFLWIALSSIQPIGLLMSGYASNNKYSLLGGLRAAAQSISYEIPLALSVLAIVLMTNSLSTIDIVNQQSGAGILSWNIWRQPVGFIIFWICALAECERLPFDLPEAEEELVAGYQTEYAGMKFALFYLGSYINLILSALLVSILYLGGWGFPIPVEIIAKALNLPIDAPVIQVFTASIGIIMTVLKAYLLVFVAILLRWTTPRVRIDQLLDLGWKFLLPISLANLLVTAGLKLAFPQFFGG.

Transmembrane regions (helical) follow at residues 27–47 (IIWLPLPMLLVLVSAVVGVLV), 97–117 (ILFTAGPILVLVPVILSWLIV), 128–148 (VGIGIFLWIALSSIQPIGLLM), 176–196 (LALSVLAIVLMTNSLSTIDIV), 204–224 (ILSWNIWRQPVGFIIFWICAL), 266–286 (ILSALLVSILYLGGWGFPIPV), 308–328 (SIGIIMTVLKAYLLVFVAILL), and 347–367 (FLLPISLANLLVTAGLKLAFP).

This sequence belongs to the complex I subunit 1 family. As to quaternary structure, NDH-1 is composed of at least 11 different subunits.

Its subcellular location is the cellular thylakoid membrane. It catalyses the reaction a plastoquinone + NADH + (n+1) H(+)(in) = a plastoquinol + NAD(+) + n H(+)(out). The enzyme catalyses a plastoquinone + NADPH + (n+1) H(+)(in) = a plastoquinol + NADP(+) + n H(+)(out). Functionally, NDH-1 shuttles electrons from an unknown electron donor, via FMN and iron-sulfur (Fe-S) centers, to quinones in the respiratory and/or the photosynthetic chain. The immediate electron acceptor for the enzyme in this species is believed to be plastoquinone. Couples the redox reaction to proton translocation, and thus conserves the redox energy in a proton gradient. This chain is NAD(P)H-quinone oxidoreductase subunit 1, found in Prochlorococcus marinus subsp. pastoris (strain CCMP1986 / NIES-2087 / MED4).